We begin with the raw amino-acid sequence, 273 residues long: Coiled-coil domain-containing protein 3 (273 aa).

An N-terminal signal peptide occupies residues 1 to 21 (MPLPLLLAALCLAASPAPARA). Asn100 carries N-linked (GlcNAc...) asparagine glycosylation. Positions 188 to 250 (SVQKALFEEE…VNQKLNEKLG (63 aa)) form a coiled coil.

As to quaternary structure, homodimer. In terms of processing, N-glycosylated. Expressed in aorta and adipose tissue. Enriched in mature adipocytes. Over-expressed in adipose tissue from either hormonally-induced or nutritionally-regulated obese mice models.

The protein resides in the secreted. In terms of biological role, negatively regulates TNF-alpha-induced pro-inflammatory response in endothelial cells (ECs) via inhibition of TNF-alpha-induced NF-kappaB activation in ECs. Positively regulates lipid accumulation in adipose cells. The chain is Coiled-coil domain-containing protein 3 (Ccdc3) from Mus musculus (Mouse).